A 3343-amino-acid polypeptide reads, in one-letter code: Breast cancer type 2 susceptibility protein homolog (3343 aa).

The segment at 1-40 (MTVEYKRRPTFWEIFKARCSTADLGPISLNWFEELFSEAP) is interaction with PALB2. The tract at residues 40–60 (PPYNTEHPEESEYKPQGHEPQ) is disordered. Positions 45–56 (EHPEESEYKPQG) are enriched in basic and acidic residues. A Phosphoserine modification is found at S70. The interval 348–381 (IEPRDSEPLDPSVTNQKPLYSQSGDISSEAGQCS) is disordered. Residues 359–381 (SVTNQKPLYSQSGDISSEAGQCS) are compositionally biased toward polar residues. A phosphoserine mark is found at S475 and S736. Positions 622 to 982 (PDSSIKRSNL…DKWSEFLDPL (361 aa)) are interaction with NPM1. 8 BRCA2 repeats span residues 984–1018 (NHKL…DIEE), 1197–1231 (KEME…DIEN), 1405–1439 (MKEF…QETE), 1503–1537 (KEPT…ETQY), 1645–1669 (CYTG…WLRE), 1828–1845 (FITT…IFTD), 1939–1973 (PSRT…EIDG), and 2019–2053 (SSFV…EFDL). The segment at 985–2050 (HKLGGSFRTA…LHKVKGMLEE (1066 aa)) is interaction with RAD51. Disordered regions lie at residues 2059–2138 (TLQH…VLGT), 2297–2356 (PFCS…SDKS), and 2377–2407 (DSKN…PQFN). A Phosphoserine modification is found at S2063. Composition is skewed to polar residues over residues 2083–2094 (PEYSVSSKLQKT) and 2101–2125 (SPSN…QLSQ). The segment at 2233–2300 (RKRGGMAGVA…EPVTCGPFCS (68 aa)) is interaction with HSF2BP. Polar residues-rich tracts occupy residues 2307-2320 (TQSP…QGLQ) and 2332-2342 (GKSSSNPTVSA). The segment at 2313–2475 (TSPAQGLQSK…SPKQLYMYGV (163 aa)) is interaction with FANCD2. The span at 2344–2356 (RSERTRHSVSDKS) shows a compositional bias: basic and acidic residues. The interval 2411-2762 (MSSLQNARDL…QRVYPLQWVE (352 aa)) is interaction with SEM1. Positions 2612–2628 (AAKTLVLCVSDIISLST) match the Nuclear export signal; masked by interaction with SEM1 motif. Residues 3114 to 3163 (DSPKWSTPNKDPTREPYPASTCSASDLASGGQLPRSSPTDQQSYRSPLSC) are disordered. A compositionally biased stretch (polar residues) spans 3147–3163 (PRSSPTDQQSYRSPLSC). Phosphoserine; by CDK1 and CDK2 is present on S3222. Disordered regions lie at residues 3231 to 3255 (PPRS…WSRA) and 3289 to 3343 (VGGS…PDYS). S3250 carries the phosphoserine modification. Positions 3295 to 3310 (VFPSDSTRTEGPSAST) are enriched in polar residues. Residues 3318 to 3334 (SKRESLRDCRDDSDGKL) show a composition bias toward basic and acidic residues.

Monomer and dimer. Interacts with RAD51; regulates RAD51 recruitment and function at sites of DNA repair. Interacts with SEM1, WDR16, USP11, DMC1, ROCK2 and NPM1. Interacts with both nonubiquitinated and monoubiquitinated FANCD2; this complex also includes XRCC3 and phosphorylated FANCG. Part of a BRCA complex containing BRCA1, BRCA2 and PALB2. Component of the homologous recombination repair (HR) complex composed of ERCC5/XPG, BRCA2, PALB2, DSS1 and RAD51. Within the complex, interacts with ERCC5/XPG and PALB2. Interacts directly with PALB2 which may serve as a scaffold for a HR complex containing PALB2, BRCA2, RAD51C, RAD51 and XRCC3. Interacts with BRCA1 only in the presence of PALB2 which serves as the bridging protein. Interacts with POLH; the interaction is direct. Interacts with the TREX-2 complex subunits PCID2 and SEM1. Interacts with HSF2BP and BRME1; the interaction with HSF2BP is direct and allows the formation of a ternary complex. The complex BRME1:HSF2BP:BRCA2 interacts with SPATA22, MEIOB and RAD51. In terms of processing, phosphorylated by ATM upon irradiation-induced DNA damage. Phosphorylation by CHEK1 and CHEK2 regulates interaction with RAD51. Phosphorylation at Ser-3222 by CDK1 and CDK2 is low in S phase when recombination is active, but increases as cells progress towards mitosis; this phosphorylation prevents homologous recombination-dependent repair during S phase and G2 by inhibiting RAD51 binding. Post-translationally, ubiquitinated in the absence of DNA damage; this does not lead to proteasomal degradation. In contrast, ubiquitination in response to DNA damage leads to proteasomal degradation. As to expression, highest expression in testis. Also expressed in spleen, skeletal muscle, thymus, mammary gland, heart, ovary, prostate, liver, lung, kidney and brain.

The protein localises to the nucleus. Its subcellular location is the cytoplasm. The protein resides in the cytoskeleton. It localises to the microtubule organizing center. It is found in the centrosome. Functionally, involved in double-strand break repair and/or homologous recombination. Binds RAD51 and potentiates recombinational DNA repair by promoting assembly of RAD51 onto single-stranded DNA (ssDNA). Acts by targeting RAD51 to ssDNA over double-stranded DNA, enabling RAD51 to displace replication protein-A (RPA) from ssDNA and stabilizing RAD51-ssDNA filaments by blocking ATP hydrolysis. Part of a PALB2-scaffolded HR complex containing RAD51C and which is thought to play a role in DNA repair by HR. May participate in S phase checkpoint activation. Binds selectively to ssDNA, and to ssDNA in tailed duplexes and replication fork structures. May play a role in the extension step after strand invasion at replication-dependent DNA double-strand breaks; together with PALB2 is involved in both POLH localization at collapsed replication forks and DNA polymerization activity. In concert with NPM1, regulates centrosome duplication. Interacts with the TREX-2 complex (transcription and export complex 2) subunits PCID2 and SEM1, and is required to prevent R-loop-associated DNA damage and thus transcription-associated genomic instability, independently of its known role in homologous recombination. The sequence is that of Breast cancer type 2 susceptibility protein homolog from Rattus norvegicus (Rat).